A 166-amino-acid polypeptide reads, in one-letter code: Cytochrome b (166 aa).

The next 4 membrane-spanning stretches (helical) occupy residues 15 to 35 (FKDI…VLIN), 77 to 97 (LGGV…PFYN), 109 to 129 (INQI…WIGA), and 136 to 156 (YVLL…INPL).

It belongs to the cytochrome b family. In terms of assembly, the main subunits of complex b-c1 are: cytochrome b, cytochrome c1 and the Rieske protein. The cofactor is heme.

The protein localises to the mitochondrion inner membrane. Its function is as follows. Component of the ubiquinol-cytochrome c reductase complex (complex III or cytochrome b-c1 complex) that is part of the mitochondrial respiratory chain. The b-c1 complex mediates electron transfer from ubiquinol to cytochrome c. Contributes to the generation of a proton gradient across the mitochondrial membrane that is then used for ATP synthesis. The chain is Cytochrome b (mt:Cyt-b) from Drosophila subobscura (Fruit fly).